Consider the following 89-residue polypeptide: MALSKERKNEIIAEYATKQGDTGSPEVQVAVLTEQINTLNDHLRTHKKDHHSRRGLLKMVGRRRNLLTYLRNKDVTRYRELIQRLGLRR.

This sequence belongs to the universal ribosomal protein uS15 family. As to quaternary structure, part of the 30S ribosomal subunit. Forms a bridge to the 50S subunit in the 70S ribosome, contacting the 23S rRNA.

In terms of biological role, one of the primary rRNA binding proteins, it binds directly to 16S rRNA where it helps nucleate assembly of the platform of the 30S subunit by binding and bridging several RNA helices of the 16S rRNA. Functionally, forms an intersubunit bridge (bridge B4) with the 23S rRNA of the 50S subunit in the ribosome. The polypeptide is Small ribosomal subunit protein uS15 (Exiguobacterium sp. (strain ATCC BAA-1283 / AT1b)).